A 93-amino-acid polypeptide reads, in one-letter code: MKVDREKYGSEKIAKLKILEELKKENPNKKIIAIGNGNNDELLLKNADLGICVIGDEGAWSKTILSSDIVVKDINDALDLLLNENRLKATSRD.

This is an uncharacterized protein from Methanocaldococcus jannaschii (strain ATCC 43067 / DSM 2661 / JAL-1 / JCM 10045 / NBRC 100440) (Methanococcus jannaschii).